Consider the following 331-residue polypeptide: NADH-quinone oxidoreductase subunit H (331 aa).

The next 8 helical transmembrane spans lie at alanine 7 to isoleucine 27, methionine 81 to valine 101, isoleucine 114 to glycine 134, isoleucine 154 to phenylalanine 174, valine 187 to valine 207, phenylalanine 238 to phenylalanine 258, tryptophan 271 to isoleucine 291, and valine 310 to alanine 330.

It belongs to the complex I subunit 1 family. In terms of assembly, NDH-1 is composed of 13 different subunits. Subunits NuoA, H, J, K, L, M, N constitute the membrane sector of the complex.

It localises to the cell inner membrane. It catalyses the reaction a quinone + NADH + 5 H(+)(in) = a quinol + NAD(+) + 4 H(+)(out). NDH-1 shuttles electrons from NADH, via FMN and iron-sulfur (Fe-S) centers, to quinones in the respiratory chain. The immediate electron acceptor for the enzyme in this species is believed to be ubiquinone. Couples the redox reaction to proton translocation (for every two electrons transferred, four hydrogen ions are translocated across the cytoplasmic membrane), and thus conserves the redox energy in a proton gradient. This subunit may bind ubiquinone. The protein is NADH-quinone oxidoreductase subunit H of Pseudomonas aeruginosa (strain ATCC 15692 / DSM 22644 / CIP 104116 / JCM 14847 / LMG 12228 / 1C / PRS 101 / PAO1).